The sequence spans 544 residues: Rubrofusarin-specific efflux pump aurT (544 aa).

The segment covering 1-12 has biased composition (basic and acidic residues); it reads MTDNTDMEKLDR. The tract at residues 1-42 is disordered; it reads MTDNTDMEKLDRATTPTPIPNEAPPTSEPSESKPEEAEDESK. Pro residues predominate over residues 17–27; it reads TPIPNEAPPTS. Basic and acidic residues predominate over residues 30-42; the sequence is SESKPEEAEDESK. Transmembrane regions (helical) follow at residues 45-65, 89-111, 116-136, 146-166, 177-197, 205-225, 246-266, and 276-296; these read HGLK…LVAL, WYAS…IFTF, TVYL…GVAP, AIAG…ITTV, GMMG…GGAF, WCFY…ILLF, WGNL…QWGG, and IVAL…IQIW. The N-linked (GlcNAc...) asparagine glycan is linked to Asn300. A run of 6 helical transmembrane segments spans residues 318–338, 357–377, 380–400, 407–427, 444–464, and 514–534; these read IFAF…PIWF, VLSL…VGWF, VFFS…TFVV, WIGY…LASL, LMFF…QAVF, and YFYV…GIEW.

It belongs to the major facilitator superfamily. TCR/Tet family.

The protein resides in the cell membrane. It functions in the pathway pigment biosynthesis. Functionally, rubrofusarin-specific efflux pump; part of the gene cluster that mediates the biosynthesis of aurofusarin, a red mycelium pigment which is acting as a mycotoxin. The first step is performed by the polyketide synthase which condenses one acetyl-CoA and 6 malonyl-CoA units to form the first intermediate, the cyclic heptaketide and yellow pigment YWA1. The C2 hydroxyl group in the pyrone ring of YWA1 is probably formed during ring closure by an aldol-type cyclization reaction. The dehydratase aurZ then acts as the first tailoring enzyme in the aurofusarin biosynthetic pathway by converting YWA1 to nor-rubrofusarin. Nor-rubrofusarin is then methylated to rubrofusarin by the O-methyltransferase aurJ. Rubrofusarin is then transported across the plasma membrane by the rubrofusarin-specific pump aurT for further enzymatic processing by the extracellular complex composed of GIP1, aurF, aurO and aurS to yield aurofusarin. This Gibberella zeae (strain ATCC MYA-4620 / CBS 123657 / FGSC 9075 / NRRL 31084 / PH-1) (Wheat head blight fungus) protein is Rubrofusarin-specific efflux pump aurT.